We begin with the raw amino-acid sequence, 1607 residues long: Abnormal cell migration protein 38 (1607 aa).

12 disordered regions span residues 14-52, 67-93, 167-222, 326-425, 459-478, 549-594, 845-931, 1017-1061, 1141-1241, 1319-1378, 1392-1445, and 1517-1607; these read EFNK…SQDF, RLSP…QYHV, STSY…AAQA, GSSA…PPSQ, SPNT…GMDQ, MVHR…QHSY, YDEN…PETE, SVQV…DYDM, EPSP…VTPK, ETPN…KGQL, FANV…PQAV, and KVKT…STDP. Polar residues-rich tracts occupy residues 81–93 and 179–191; these read PGPS…QYHV and PSGN…NHQQ. A compositionally biased stretch (low complexity) spans 195–205; the sequence is VPQVQQQPAKP. Basic residues predominate over residues 206–218; sequence KTTKKRPPPKKKT. Positions 327 to 341 are enriched in low complexity; that stretch reads SSASSSAQPSQPAKK. Polar residues-rich tracts occupy residues 349-371 and 379-425; these read VPNT…QITP and PTTT…PPSQ. Low complexity predominate over residues 585-594; it reads NSHSQSQHSY. Positions 858 to 871 are enriched in acidic residues; it reads EEPESESESEPEAE. 2 stretches are compositionally biased toward basic and acidic residues: residues 872–886 and 907–917; these read PEPK…EPAR and YRNESESTFDW. Low complexity-rich tracts occupy residues 1333–1354, 1395–1419, and 1584–1601; these read PNIP…SVSV, VPSS…VSAK, and LLGT…SSGL.

As to expression, expressed in gonad distal tip cells and gonad sheath cells.

It is found in the nucleus. The protein resides in the cytoplasm. Its function is as follows. During gonad development, involved in distal tip cell (DTC) migration from the dorsal side of the hermaphrodite body to the midbody which allows for the formation of gonad arms. Role in gonad DTC migration may be in association with integrin related proteins ina-1 and mig-15. This Caenorhabditis elegans protein is Abnormal cell migration protein 38.